A 275-amino-acid polypeptide reads, in one-letter code: Dermonecrotic toxin SpaSicTox-betaIIA2 (275 aa).

His-5 is a catalytic residue. Mg(2+) contacts are provided by Glu-25 and Asp-27. His-41 functions as the Nucleophile in the catalytic mechanism. 2 disulfide bridges follow: Cys-45/Cys-51 and Cys-47/Cys-190. Mg(2+) is bound at residue Asp-85.

Belongs to the arthropod phospholipase D family. Class II subfamily. Mg(2+) is required as a cofactor. As to expression, expressed by the venom gland.

It localises to the secreted. The catalysed reaction is an N-(acyl)-sphingosylphosphocholine = an N-(acyl)-sphingosyl-1,3-cyclic phosphate + choline. The enzyme catalyses an N-(acyl)-sphingosylphosphoethanolamine = an N-(acyl)-sphingosyl-1,3-cyclic phosphate + ethanolamine. It carries out the reaction a 1-acyl-sn-glycero-3-phosphocholine = a 1-acyl-sn-glycero-2,3-cyclic phosphate + choline. It catalyses the reaction a 1-acyl-sn-glycero-3-phosphoethanolamine = a 1-acyl-sn-glycero-2,3-cyclic phosphate + ethanolamine. Functionally, dermonecrotic toxins cleave the phosphodiester linkage between the phosphate and headgroup of certain phospholipids (sphingolipid and lysolipid substrates), forming an alcohol (often choline) and a cyclic phosphate. This toxin acts on sphingomyelin (SM). It may also act on ceramide phosphoethanolamine (CPE), lysophosphatidylcholine (LPC) and lysophosphatidylethanolamine (LPE), but not on lysophosphatidylserine (LPS), and lysophosphatidylglycerol (LPG). It acts by transphosphatidylation, releasing exclusively cyclic phosphate products as second products. Induces dermonecrosis, hemolysis, increased vascular permeability, edema, inflammatory response, and platelet aggregation. The chain is Dermonecrotic toxin SpaSicTox-betaIIA2 from Sicarius patagonicus (Six-eyed sand spider).